A 92-amino-acid chain; its full sequence is Probable Fe(2+)-trafficking protein (92 aa).

It belongs to the Fe(2+)-trafficking protein family.

Could be a mediator in iron transactions between iron acquisition and iron-requiring processes, such as synthesis and/or repair of Fe-S clusters in biosynthetic enzymes. This chain is Probable Fe(2+)-trafficking protein, found in Shewanella loihica (strain ATCC BAA-1088 / PV-4).